Reading from the N-terminus, the 77-residue chain is MDREQRIKEIIADQLGVEVDKLTPDAKFVEDLGADSLDVVELIMSFEEEFNIEIPDEDAEKIKTVGDVINYLNEKLK.

Residues 1–76 (MDREQRIKEI…DVINYLNEKL (76 aa)) enclose the Carrier domain. Residue S36 is modified to O-(pantetheine 4'-phosphoryl)serine.

This sequence belongs to the acyl carrier protein (ACP) family. In terms of processing, 4'-phosphopantetheine is transferred from CoA to a specific serine of apo-ACP by AcpS. This modification is essential for activity because fatty acids are bound in thioester linkage to the sulfhydryl of the prosthetic group.

Its subcellular location is the cytoplasm. Its pathway is lipid metabolism; fatty acid biosynthesis. In terms of biological role, carrier of the growing fatty acid chain in fatty acid biosynthesis. This is Acyl carrier protein from Hydrogenobaculum sp. (strain Y04AAS1).